The sequence spans 857 residues: Leucine-rich repeat extensin-like protein 5 (857 aa).

Positions 1–31 are cleaved as a signal peptide; the sequence is MKTKMMMKNTSLIFVLLFITFFFTSISYSLS. One copy of the LRR 1 repeat lies at 32–53; sequence LTFNGDLSDNEVRLITQRQLLY. Residue Asn98 is glycosylated (N-linked (GlcNAc...) asparagine). LRR repeat units lie at residues 125–149, 150–172, 174–197, 198–221, 223–244, 246–267, 268–291, 292–315, 316–339, and 341–362; these read IRTV…LGLL, TDLA…RFNR, KLLF…VLQL, PSLK…LFSK, LDAI…LGDS, VSVI…LGDM, RNLE…IGRL, KNVT…IGGM, VSME…ICQL, and RLEN…CLGL. Asn293 carries N-linked (GlcNAc...) asparagine glycosylation. Asn344 carries an N-linked (GlcNAc...) asparagine glycan. Disordered stretches follow at residues 406-776 and 817-839; these read PPVV…EYSP and YSPP…YEGP. Pro residues-rich tracts occupy residues 408–571 and 579–768; these read VVVP…PTPI and PIIP…PQSH. The contains the Ser-Pro(4) repeats stretch occupies residues 615–857; the sequence is SPPPSTPTPV…YASPPPPPFY (243 aa).

In terms of processing, hydroxylated on proline residues in the S-P-P-P-P repeat. O-glycosylated on hydroxyprolines. In terms of tissue distribution, expressed in roots, leaves and flowers.

It localises to the secreted. Its subcellular location is the cell wall. In terms of biological role, modulates cell morphogenesis by regulating cell wall formation and assembly, and/or growth polarization. This chain is Leucine-rich repeat extensin-like protein 5 (LRX5), found in Arabidopsis thaliana (Mouse-ear cress).